We begin with the raw amino-acid sequence, 122 residues long: Large ribosomal subunit protein uL14 (122 aa).

It belongs to the universal ribosomal protein uL14 family. As to quaternary structure, part of the 50S ribosomal subunit. Forms a cluster with proteins L3 and L19. In the 70S ribosome, L14 and L19 interact and together make contacts with the 16S rRNA in bridges B5 and B8.

Its function is as follows. Binds to 23S rRNA. Forms part of two intersubunit bridges in the 70S ribosome. The sequence is that of Large ribosomal subunit protein uL14 from Exiguobacterium sibiricum (strain DSM 17290 / CCUG 55495 / CIP 109462 / JCM 13490 / 255-15).